The primary structure comprises 140 residues: Putative peptidyl-tRNA hydrolase PTRHD1 (140 aa).

Belongs to the PTH2 family. PTRHD1 subfamily.

It carries out the reaction an N-acyl-L-alpha-aminoacyl-tRNA + H2O = an N-acyl-L-amino acid + a tRNA + H(+). In terms of biological role, as a putative peptidyl-tRNA hydrolase, it might be involved in releasing tRNAs from the ribosome during protein synthesis. Some evidence, however, suggests that it lacks peptidyl-tRNA hydrolase activity. The protein is Putative peptidyl-tRNA hydrolase PTRHD1 (Ptrhd1) of Mus musculus (Mouse).